The following is a 488-amino-acid chain: Altronate oxidoreductase (488 aa).

Residue 18 to 29 (VIQFGEGNFLRA) participates in NAD(+) binding.

It belongs to the mannitol dehydrogenase family. UxaB subfamily.

It catalyses the reaction D-altronate + NAD(+) = keto-D-tagaturonate + NADH + H(+). It functions in the pathway carbohydrate metabolism; pentose and glucuronate interconversion. The protein is Altronate oxidoreductase of Pectobacterium atrosepticum (strain SCRI 1043 / ATCC BAA-672) (Erwinia carotovora subsp. atroseptica).